Consider the following 277-residue polypeptide: MKQYLDLMRHVRDTGTKKEDRTGTGTVSVFGYQMRFDLSEGFPLVTTKKCHLKSIIHELLWFLKGETNTQYLTDNGVRIWNEWATEEGDLGPVYGAQWRSWPTPDGGSLDQFALLVEQIKNKPDSRRHIISAWNPALLPDEGVSPQDNVRNGKMALPPCHTLFQFYVADNKLSCQLYQRSADIFLGVPFNIASYALLTMMVAQVTGLELGDFVHTFGDAHLYLNHLEQVETQLAREPLPLPTMKINPEVKDIFSFKFEDFELVDYQAHPHISAPISI.

DUMP is bound at residue R21. H51 provides a ligand contact to (6R)-5,10-methylene-5,6,7,8-tetrahydrofolate. Residue 126–127 coordinates dUMP; that stretch reads RR. C159 (nucleophile) is an active-site residue. Residues 179–182, N190, and 220–222 each bind dUMP; these read RSAD and HLY. D182 contacts (6R)-5,10-methylene-5,6,7,8-tetrahydrofolate. Residue S276 coordinates (6R)-5,10-methylene-5,6,7,8-tetrahydrofolate.

The protein belongs to the thymidylate synthase family. Bacterial-type ThyA subfamily. Homodimer.

Its subcellular location is the cytoplasm. It catalyses the reaction dUMP + (6R)-5,10-methylene-5,6,7,8-tetrahydrofolate = 7,8-dihydrofolate + dTMP. It functions in the pathway pyrimidine metabolism; dTTP biosynthesis. In terms of biological role, catalyzes the reductive methylation of 2'-deoxyuridine-5'-monophosphate (dUMP) to 2'-deoxythymidine-5'-monophosphate (dTMP) while utilizing 5,10-methylenetetrahydrofolate (mTHF) as the methyl donor and reductant in the reaction, yielding dihydrofolate (DHF) as a by-product. This enzymatic reaction provides an intracellular de novo source of dTMP, an essential precursor for DNA biosynthesis. The protein is Thymidylate synthase of Saccharophagus degradans (strain 2-40 / ATCC 43961 / DSM 17024).